The sequence spans 799 residues: 1,4-alpha-glucan-branching enzyme 2, chloroplastic/amyloplastic (799 aa).

Residues 1–57 constitute a chloroplast transit peptide; the sequence is MAFRVSGAVLGGAVRAPRLTGGGEGSLVFRHTGLFLTRGARVGCSGTHGAMRAAAAA. Residues Trp196 and Lys232 each contribute to the (1,4-alpha-D-glucosyl)n site. The Nucleophile role is filled by Asp447. Catalysis depends on Glu502, which acts as the Proton donor.

Belongs to the glycosyl hydrolase 13 family. GlgB subfamily. In terms of assembly, monomer.

It is found in the plastid. It localises to the chloroplast. Its subcellular location is the amyloplast. The enzyme catalyses Transfers a segment of a (1-&gt;4)-alpha-D-glucan chain to a primary hydroxy group in a similar glucan chain.. The protein operates within glycan biosynthesis; starch biosynthesis. Its function is as follows. Catalyzes the formation of the alpha-1,6-glucosidic linkages in starch by scission of a 1,4-alpha-linked oligosaccharide from growing alpha-1,4-glucan chains and the subsequent attachment of the oligosaccharide to the alpha-1,6 position. In Zea mays (Maize), this protein is 1,4-alpha-glucan-branching enzyme 2, chloroplastic/amyloplastic (SBE1).